Consider the following 727-residue polypeptide: Putative E3 ubiquitin-protein ligase UNKL (727 aa).

The disordered stretch occupies residues 1-21; sequence MPSVSKAAAAALSGSPPQTEK. 4 C3H1-type zinc fingers span residues 75–104, 115–145, 243–277, and 285–313; these read YSPD…HRTT, YYKT…HGPL, QYRS…HSRT, and IYKS…HTEK. The span at 330–339 shows a compositional bias: polar residues; sequence STSAYSSQPG. 3 disordered regions span residues 330–360, 446–514, and 543–562; these read STSA…DSKQ, LTGP…ATLG, and SPSP…SPNS. Positions 463 to 495 are enriched in low complexity; sequence SLPRSPSLHSSSSLSTSPLSSLSQSLSGPLVSS. The segment at 686-721 adopts an RING-type zinc-finger fold; sequence CVACQERAHGTVLRPCQHRVLCEPCAASTPECPYCK.

The protein belongs to the unkempt family. In terms of assembly, interacts with the GTP-bound form of Rac1. Interacts with Baf60b/Smarcd2. In terms of processing, ubiquitination is enhanced by activated Rac1. The presence of the RING finger domain is not essential for ubiquitination to occur. In terms of tissue distribution, ubiquitous.

It is found in the cytoplasm. The protein localises to the nucleus. The protein operates within protein modification; protein ubiquitination. Its function is as follows. May participate in a protein complex showing an E3 ligase activity regulated by Rac1. Ubiquitination is directed towards itself and possibly other substrates, such as Baf60b/Smarcd2. Intrinsic E3 ligase activity has not been proven. This is Putative E3 ubiquitin-protein ligase UNKL (Unkl) from Mus musculus (Mouse).